A 160-amino-acid chain; its full sequence is Cyclic pyranopterin monophosphate synthase (160 aa).

Substrate contacts are provided by residues 76–78 (LCH) and 114–115 (ME). D129 is an active-site residue.

It belongs to the MoaC family. As to quaternary structure, homohexamer; trimer of dimers.

The catalysed reaction is (8S)-3',8-cyclo-7,8-dihydroguanosine 5'-triphosphate = cyclic pyranopterin phosphate + diphosphate. It functions in the pathway cofactor biosynthesis; molybdopterin biosynthesis. In terms of biological role, catalyzes the conversion of (8S)-3',8-cyclo-7,8-dihydroguanosine 5'-triphosphate to cyclic pyranopterin monophosphate (cPMP). The sequence is that of Cyclic pyranopterin monophosphate synthase from Mesorhizobium japonicum (strain LMG 29417 / CECT 9101 / MAFF 303099) (Mesorhizobium loti (strain MAFF 303099)).